A 141-amino-acid polypeptide reads, in one-letter code: Large ribosomal subunit protein uL11 (141 aa).

The protein belongs to the universal ribosomal protein uL11 family. Part of the ribosomal stalk of the 50S ribosomal subunit. Interacts with L10 and the large rRNA to form the base of the stalk. L10 forms an elongated spine to which L12 dimers bind in a sequential fashion forming a multimeric L10(L12)X complex. One or more lysine residues are methylated.

Functionally, forms part of the ribosomal stalk which helps the ribosome interact with GTP-bound translation factors. The polypeptide is Large ribosomal subunit protein uL11 (Nostoc punctiforme (strain ATCC 29133 / PCC 73102)).